A 62-amino-acid polypeptide reads, in one-letter code: Sperm protamine P1 (62 aa).

The disordered stretch occupies residues 1–62; that stretch reads MARYRHSRSR…RYSRRRRRRY (62 aa).

The protein belongs to the protamine P1 family. Testis.

It is found in the nucleus. The protein resides in the chromosome. Protamines substitute for histones in the chromatin of sperm during the haploid phase of spermatogenesis. They compact sperm DNA into a highly condensed, stable and inactive complex. This Bettongia penicillata (Brush-tailed bettong) protein is Sperm protamine P1 (PRM1).